The primary structure comprises 274 residues: Cytochrome c oxidase subunit 3 (274 aa).

Topologically, residues 2-15 (AHVKNHDYQILPPS) are cytoplasmic. The chain crosses the membrane as a helical span at residues 16–36 (IWPFFGAIGAFVMLTGAVAWM). Over 37–48 (KGITFFGLPVEG) the chain is Periplasmic. The chain crosses the membrane as a helical span at residues 49-77 (PWMFLIGLVGVLYVMFGWWADVVNEGETG). Residues 78–79 (EH) are Cytoplasmic-facing. The helical transmembrane segment at 80 to 115 (TPVVRIGLQYGFILFIMSEVMFFVAWFWAFIKNALY) threads the bilayer. Residues 116–139 (PMGPDSPIKDGVWPPEGIVTFDPW) lie on the Periplasmic side of the membrane. Residues 140-166 (HLPLINTLILLLSGVAVTWAHHAFVLE) form a helical membrane-spanning segment. Over 167-168 (GD) the chain is Cytoplasmic. The helical transmembrane segment at 169–197 (RKTTINGLIVAVILGVCFTGLQAYEYSHA) threads the bilayer. Residues 198–203 (AFGLAD) are Periplasmic-facing. The chain crosses the membrane as a helical span at residues 204-237 (TVYAGAFYMATGFHGAHVIIGTIFLFVCLIRLLK). The Cytoplasmic portion of the chain corresponds to 238 to 244 (GQMTQKQ). Residues 245 to 274 (HVGFEAAAWYWHFVDVVWLFLFVVIYIWGR) traverse the membrane as a helical segment.

This sequence belongs to the cytochrome c oxidase subunit 3 family.

The protein localises to the cell inner membrane. It catalyses the reaction 4 Fe(II)-[cytochrome c] + O2 + 8 H(+)(in) = 4 Fe(III)-[cytochrome c] + 2 H2O + 4 H(+)(out). This chain is Cytochrome c oxidase subunit 3 (ctaE), found in Paracoccus denitrificans.